The sequence spans 205 residues: Holliday junction branch migration complex subunit RuvA (205 aa).

The interval 1–64 (MIGKLKGIID…EDQIKLFGFR (64 aa)) is domain I. Residues 65-143 (TDTEREWFRL…ALSAVDPAVV (79 aa)) form a domain II region. The tract at residues 144-154 (KLSGAIDDNRA) is flexible linker. The segment at 154–205 (APRAVTDAISALVNLGYGQPQAAAAVATASRTAGEDAETAQLIKLGLKELSK) is domain III.

It belongs to the RuvA family. Homotetramer. Forms an RuvA(8)-RuvB(12)-Holliday junction (HJ) complex. HJ DNA is sandwiched between 2 RuvA tetramers; dsDNA enters through RuvA and exits via RuvB. An RuvB hexamer assembles on each DNA strand where it exits the tetramer. Each RuvB hexamer is contacted by two RuvA subunits (via domain III) on 2 adjacent RuvB subunits; this complex drives branch migration. In the full resolvosome a probable DNA-RuvA(4)-RuvB(12)-RuvC(2) complex forms which resolves the HJ.

It localises to the cytoplasm. The RuvA-RuvB-RuvC complex processes Holliday junction (HJ) DNA during genetic recombination and DNA repair, while the RuvA-RuvB complex plays an important role in the rescue of blocked DNA replication forks via replication fork reversal (RFR). RuvA specifically binds to HJ cruciform DNA, conferring on it an open structure. The RuvB hexamer acts as an ATP-dependent pump, pulling dsDNA into and through the RuvAB complex. HJ branch migration allows RuvC to scan DNA until it finds its consensus sequence, where it cleaves and resolves the cruciform DNA. This Rhodopseudomonas palustris (strain TIE-1) protein is Holliday junction branch migration complex subunit RuvA.